The primary structure comprises 89 residues: MSLSAEQKGEIVKKHARTASDTGSPEVQVALLTARIQHLSGHFAEHKQDHHSRQGLLKLVSQRRKLLDYLKRKDRQRYLDLIENLGLRK.

The disordered stretch occupies residues 1-25; sequence MSLSAEQKGEIVKKHARTASDTGSP.

Belongs to the universal ribosomal protein uS15 family. As to quaternary structure, part of the 30S ribosomal subunit. Forms a bridge to the 50S subunit in the 70S ribosome, contacting the 23S rRNA.

In terms of biological role, one of the primary rRNA binding proteins, it binds directly to 16S rRNA where it helps nucleate assembly of the platform of the 30S subunit by binding and bridging several RNA helices of the 16S rRNA. Its function is as follows. Forms an intersubunit bridge (bridge B4) with the 23S rRNA of the 50S subunit in the ribosome. This is Small ribosomal subunit protein uS15 from Alkalilimnicola ehrlichii (strain ATCC BAA-1101 / DSM 17681 / MLHE-1).